The following is a 228-amino-acid chain: HTH-type transcriptional regulator ArcR (228 aa).

Position 22-141 (22-141 (SYINIPVGVL…VKLFSLLSET (120 aa))) interacts with a nucleoside 3',5'-cyclic phosphate. One can recognise an HTH crp-type domain in the interval 155–228 (KLAKERVTKI…SKNWLVSKDL (74 aa)). Positions 188 to 207 (IQLLSDMAGISRETTSHIIN) form a DNA-binding region, H-T-H motif.

The protein resides in the cytoplasm. Its function is as follows. Positively regulates the expression of the arcABDCR operon under anaerobic conditions, thus playing an essential role in arginine catabolism. May also control the expression of genes encoding proteins which are involved in anaerobic metabolism. Can bind cyclic AMP. This chain is HTH-type transcriptional regulator ArcR (arcR), found in Staphylococcus epidermidis (strain ATCC 12228 / FDA PCI 1200).